A 79-amino-acid chain; its full sequence is Cytochrome c oxidase subunit 7A1, mitochondrial (79 aa).

A mitochondrion-targeting transit peptide spans 1-21 (MQALRVSQALIRSFSSTARNR). Topologically, residues 22-46 (FQNRVREKQKLFQEDNDIPLYLKGG) are mitochondrial matrix. Residues 47-75 (IVDNILYRVTMTLCLGGTVYSLYSLGWAS) traverse the membrane as a helical segment. Topologically, residues 76-79 (FPRN) are mitochondrial intermembrane.

It belongs to the cytochrome c oxidase VIIa family. In terms of assembly, component of the complex IV (CIV, cytochrome c oxidase), a multisubunit enzyme composed of 14 subunits. The complex is composed of a catalytic core of 3 subunits MT-CO1, MT-CO2 and MT-CO3, encoded in the mitochondrial DNA, and 11 supernumerary subunits COX4I1 (or COX4I2), COX5A, COX5B, COX6A2 (or COX6A1), COX6B1 (or COX6B2), COX6C, COX7A1 (or COX7A2), COX7B, COX7C, COX8B and NDUFA4, which are encoded in the nuclear genome. The complex exists as a monomer or a dimer and forms supercomplexes (SCs) in the inner mitochondrial membrane with NADH-ubiquinone oxidoreductase (complex I, CI) and ubiquinol-cytochrome c oxidoreductase (cytochrome b-c1 complex, complex III, CIII), resulting in different assemblies (supercomplex SCI(1)III(2)IV(1) and megacomplex MCI(2)III(2)IV(2)).

It is found in the mitochondrion inner membrane. The protein operates within energy metabolism; oxidative phosphorylation. Functionally, component of the mitochondrial respiratory complex IV (CIV, also named cytochrome c oxidase complex), the last enzyme in the mitochondrial electron transport chain which drives oxidative phosphorylation. The CIV complex is the component of the respiratory chain that catalyzes the reduction of oxygen to water. Acts as an assembly factor that specifically drives the homodimerization of CIV complexes, mediating the formation of mitochondrial respiratory supercomplexes (respirasomes) containing two CIV: supercomplxes with two molecules of CIV show improved activity. Despite being highly expressed in brown adipose tissue, not required for thermogenesis. The sequence is that of Cytochrome c oxidase subunit 7A1, mitochondrial (COX7A1) from Homo sapiens (Human).